The chain runs to 621 residues: F-box/LRR-repeat protein 4 (621 aa).

Asymmetric dimethylarginine is present on R28. An F-box domain is found at 277–332 (NGYFDKLPYELIQLILNHLTLPDLCRLAQTCKLLNQHCCDPLQYIHLNLQPYWAKL). 9 LRR repeats span residues 376–397 (ELVR…EIIS), 402–421 (NLQD…AFSH), 427–448 (GLKR…SILN), 452–474 (DLQH…ASMI), 480–501 (KLRT…AELA), 504–524 (CPLL…STGC), 532–558 (LPNL…ASNC), 559–583 (TRLR…LLES), and 584–609 (CKDL…LSAS).

As to quaternary structure, part of a SCF (SKP1-CUL1-F-box) protein ligase complex. Interacts with FAF2 and VCP. Interacts with PPTC7; this interaction promotes destruction of BNIP3 and NIX and mitophagy suppression.

Its subcellular location is the cytoplasm. It localises to the nucleus. The protein resides in the mitochondrion outer membrane. Functionally, substrate-recognition component of the mitochondria-localized SCF-FBXL4 ubiquitin E3 ligase complex that plays a role in the restriction of mitophagy by controlling the degradation of BNIP3 and NIX mitophagy receptors. Also rescues mitochondrial injury through reverting hyperactivation of DRP1-mediated mitochondrial fission. The protein is F-box/LRR-repeat protein 4 (FBXL4) of Bos taurus (Bovine).